Reading from the N-terminus, the 505-residue chain is Glutamyl-tRNA(Gln) amidotransferase subunit B, mitochondrial (505 aa).

It belongs to the GatB/GatE family. GatB subfamily. In terms of assembly, subunit of the heterotrimeric GatCAB amidotransferase (AdT) complex, composed of A, B and C subunits.

Its subcellular location is the mitochondrion. It carries out the reaction L-glutamyl-tRNA(Gln) + L-glutamine + ATP + H2O = L-glutaminyl-tRNA(Gln) + L-glutamate + ADP + phosphate + H(+). Its function is as follows. Allows the formation of correctly charged Gln-tRNA(Gln) through the transamidation of misacylated Glu-tRNA(Gln) in the mitochondria. The reaction takes place in the presence of glutamine and ATP through an activated gamma-phospho-Glu-tRNA(Gln). The chain is Glutamyl-tRNA(Gln) amidotransferase subunit B, mitochondrial from Schizosaccharomyces japonicus (strain yFS275 / FY16936) (Fission yeast).